We begin with the raw amino-acid sequence, 431 residues long: Histidinol dehydrogenase (431 aa).

The NAD(+) site is built by Y130, Q191, and N214. Residues S237, Q261, and H264 each coordinate substrate. Positions 261 and 264 each coordinate Zn(2+). Residues E329 and H330 each act as proton acceptor in the active site. Positions 330, 363, 417, and 422 each coordinate substrate. D363 provides a ligand contact to Zn(2+). A Zn(2+)-binding site is contributed by H422.

Belongs to the histidinol dehydrogenase family. Zn(2+) is required as a cofactor.

The enzyme catalyses L-histidinol + 2 NAD(+) + H2O = L-histidine + 2 NADH + 3 H(+). It participates in amino-acid biosynthesis; L-histidine biosynthesis; L-histidine from 5-phospho-alpha-D-ribose 1-diphosphate: step 9/9. In terms of biological role, catalyzes the sequential NAD-dependent oxidations of L-histidinol to L-histidinaldehyde and then to L-histidine. This Psychrobacter arcticus (strain DSM 17307 / VKM B-2377 / 273-4) protein is Histidinol dehydrogenase.